Here is a 374-residue protein sequence, read N- to C-terminus: Cobalt-precorrin-5B C(1)-methyltransferase (374 aa).

The protein belongs to the CbiD family.

The catalysed reaction is Co-precorrin-5B + S-adenosyl-L-methionine = Co-precorrin-6A + S-adenosyl-L-homocysteine. The protein operates within cofactor biosynthesis; adenosylcobalamin biosynthesis; cob(II)yrinate a,c-diamide from sirohydrochlorin (anaerobic route): step 6/10. Catalyzes the methylation of C-1 in cobalt-precorrin-5B to form cobalt-precorrin-6A. This Synechococcus elongatus (strain ATCC 33912 / PCC 7942 / FACHB-805) (Anacystis nidulans R2) protein is Cobalt-precorrin-5B C(1)-methyltransferase.